Here is a 283-residue protein sequence, read N- to C-terminus: MLKLNKINEVKKYVDEWKKEGLTIGLVPTMGCLHEGHKSLIDRAVKENDKVIVSVFVNPTQFGPNEDFDKYPRSIENDVDLCNKAGVSIVFNPDPKEMYFHDACTYVNVENLTDGLCGAKREGHFRGVCTVVSKLFNISQATRAYFGQKDAQQLAVIKRMVRDLNFNVEIVGCPIVRESDGLAKSSRNKYLSKEERVEALVLSRGLRKGKELLYGGIRKTSKIKETIENEIKKSHLGKIDYIEVVDSITLEPVENIERDVLVAIAVFIGKTRLIDNFIFKLGE.

ATP is bound at residue 30-37 (MGCLHEGH). His37 functions as the Proton donor in the catalytic mechanism. Residue Gln61 coordinates (R)-pantoate. Gln61 serves as a coordination point for beta-alanine. Residue 147-150 (GQKD) coordinates ATP. Position 153 (Gln153) interacts with (R)-pantoate. Residues Val176 and 184-187 (KSSR) contribute to the ATP site.

This sequence belongs to the pantothenate synthetase family. In terms of assembly, homodimer.

Its subcellular location is the cytoplasm. It catalyses the reaction (R)-pantoate + beta-alanine + ATP = (R)-pantothenate + AMP + diphosphate + H(+). It participates in cofactor biosynthesis; (R)-pantothenate biosynthesis; (R)-pantothenate from (R)-pantoate and beta-alanine: step 1/1. In terms of biological role, catalyzes the condensation of pantoate with beta-alanine in an ATP-dependent reaction via a pantoyl-adenylate intermediate. This chain is Pantothenate synthetase, found in Clostridium novyi (strain NT).